Here is a 303-residue protein sequence, read N- to C-terminus: UDP-N-acetylenolpyruvoylglucosamine reductase (303 aa).

One can recognise an FAD-binding PCMH-type domain in the interval 27–207 (KVGGISQVFY…TSISQKLQKI (181 aa)). Residue arginine 175 is part of the active site. The Proton donor role is filled by serine 224. The active site involves glutamate 294.

The protein belongs to the MurB family. FAD is required as a cofactor.

The protein resides in the cytoplasm. It catalyses the reaction UDP-N-acetyl-alpha-D-muramate + NADP(+) = UDP-N-acetyl-3-O-(1-carboxyvinyl)-alpha-D-glucosamine + NADPH + H(+). The protein operates within cell wall biogenesis; peptidoglycan biosynthesis. Its function is as follows. Cell wall formation. This is UDP-N-acetylenolpyruvoylglucosamine reductase from Orientia tsutsugamushi (strain Boryong) (Rickettsia tsutsugamushi).